Consider the following 446-residue polypeptide: MPEGRRFYIQTFGCQMNEADSGIIARVLLDAGFRRADTEQDADVVLLNTCAVRENAVEKIAHLLEHLKGAKKRRKTLQVGVLGCVPQHQREEMFSRFPAIDFIAGPDSYRRLPSLIDDAASAVRSAMLDFDPSETYVGIRQVREGRISAFIPVMRGCNNMCAFCVVPFTRGRERSQPLAMVTGEARELAEAGYREITLLGQNVNSYSDPASGATFSALLDAVALAAPDVRIRFTTSHPKDISVGLIDTIARRPNICRHVHLPVQSGSDSVLRRMNRGHGISEYLEKIRIIRDALPGVTLSTDIIAGFCGEREEDHRATLDLLRTVRFDAAFMFHYSTREGTLAARTLPDDVAETDKKRRLQEIIDLQQEISAENNRRQVGTVAEVLAESESRRSPGRLLGRTDGNRAVVFDRGECMPGDLVRVRLTSSTSATLSGSREGLIRAFLS.

The MTTase N-terminal domain occupies 5–121 (RRFYIQTFGC…LPSLIDDAAS (117 aa)). [4Fe-4S] cluster-binding residues include C14, C50, C84, C157, C161, and C164. Positions 143-373 (REGRISAFIP…IDLQQEISAE (231 aa)) constitute a Radical SAM core domain. The TRAM domain occupies 376 to 439 (RRQVGTVAEV…SATLSGSREG (64 aa)).

The protein belongs to the methylthiotransferase family. MiaB subfamily. As to quaternary structure, monomer. [4Fe-4S] cluster serves as cofactor.

The protein localises to the cytoplasm. The catalysed reaction is N(6)-dimethylallyladenosine(37) in tRNA + (sulfur carrier)-SH + AH2 + 2 S-adenosyl-L-methionine = 2-methylsulfanyl-N(6)-dimethylallyladenosine(37) in tRNA + (sulfur carrier)-H + 5'-deoxyadenosine + L-methionine + A + S-adenosyl-L-homocysteine + 2 H(+). Catalyzes the methylthiolation of N6-(dimethylallyl)adenosine (i(6)A), leading to the formation of 2-methylthio-N6-(dimethylallyl)adenosine (ms(2)i(6)A) at position 37 in tRNAs that read codons beginning with uridine. This Chlorobium luteolum (strain DSM 273 / BCRC 81028 / 2530) (Pelodictyon luteolum) protein is tRNA-2-methylthio-N(6)-dimethylallyladenosine synthase.